The primary structure comprises 218 residues: GTP cyclohydrolase 1 (218 aa).

The Zn(2+) site is built by Cys111, His114, and Cys182.

The protein belongs to the GTP cyclohydrolase I family. In terms of assembly, toroid-shaped homodecamer, composed of two pentamers of five dimers.

It catalyses the reaction GTP + H2O = 7,8-dihydroneopterin 3'-triphosphate + formate + H(+). It participates in cofactor biosynthesis; 7,8-dihydroneopterin triphosphate biosynthesis; 7,8-dihydroneopterin triphosphate from GTP: step 1/1. The polypeptide is GTP cyclohydrolase 1 (Buchnera aphidicola subsp. Schizaphis graminum (strain Sg)).